A 390-amino-acid polypeptide reads, in one-letter code: Putative transposase YncI (390 aa).

This sequence belongs to the transposase 11 family.

This is Putative transposase YncI (yncI) from Escherichia coli O157:H7.